We begin with the raw amino-acid sequence, 523 residues long: Maintenance of mitochondrial morphology protein 1 (523 aa).

The Lumenal segment spans residues M1–G43. Residues L44–F64 form a helical membrane-spanning segment. Residues G65 to T523 are Cytoplasmic-facing. Disordered regions lie at residues P70–T118, Y128–H147, T295–G349, R420–L474, and G492–T523. Polar residues-rich tracts occupy residues G74–S96 and S105–T118. Positions T137–H147 are enriched in basic residues. The SMP-LTD domain occupies Q151–P412. Over residues T295–E312 the composition is skewed to polar residues. Positions G449–R468 are enriched in gly residues.

Belongs to the MMM1 family. Homodimer. Component of the ER-mitochondria encounter structure (ERMES) or MDM complex, composed of MMM1, MDM10, MDM12 and MDM34. An MMM1 homodimer associates with one molecule of MDM12 on each side in a pairwise head-to-tail manner, and the SMP-LTD domains of MMM1 and MDM12 generate a continuous hydrophobic tunnel for phospholipid trafficking.

It localises to the endoplasmic reticulum membrane. Component of the ERMES/MDM complex, which serves as a molecular tether to connect the endoplasmic reticulum (ER) and mitochondria. Components of this complex are involved in the control of mitochondrial shape and protein biogenesis, and function in nonvesicular lipid trafficking between the ER and mitochondria. The MDM12-MMM1 subcomplex functions in the major beta-barrel assembly pathway that is responsible for biogenesis of all outer membrane beta-barrel proteins, and acts in a late step after the SAM complex. The MDM10-MDM12-MMM1 subcomplex further acts in the TOM40-specific pathway after the action of the MDM12-MMM1 complex. Essential for establishing and maintaining the structure of mitochondria and maintenance of mtDNA nucleoids. The polypeptide is Maintenance of mitochondrial morphology protein 1 (Paracoccidioides lutzii (strain ATCC MYA-826 / Pb01) (Paracoccidioides brasiliensis)).